We begin with the raw amino-acid sequence, 209 residues long: Uracil phosphoribosyltransferase (209 aa).

Residues Arg79, Arg104, and 131–139 (DPMLATGGS) each bind 5-phospho-alpha-D-ribose 1-diphosphate. Residues Ile194 and 199–201 (GDA) contribute to the uracil site. A 5-phospho-alpha-D-ribose 1-diphosphate-binding site is contributed by Asp200.

Belongs to the UPRTase family. It depends on Mg(2+) as a cofactor.

It carries out the reaction UMP + diphosphate = 5-phospho-alpha-D-ribose 1-diphosphate + uracil. It functions in the pathway pyrimidine metabolism; UMP biosynthesis via salvage pathway; UMP from uracil: step 1/1. Its activity is regulated as follows. Allosterically activated by GTP. Functionally, catalyzes the conversion of uracil and 5-phospho-alpha-D-ribose 1-diphosphate (PRPP) to UMP and diphosphate. This Enterococcus faecalis (strain ATCC 700802 / V583) protein is Uracil phosphoribosyltransferase.